The sequence spans 239 residues: Tumor protein p53-inducible nuclear protein 1 (239 aa).

An LIR motif is present at residues 25–37; sequence EKEDDEWILVDFI.

Interacts with p53/TP53 and HIPK2. Interacts with PRKCG, GABARAP, GABARAPL1, GABARAPL2, MAP1LC3A, MAP1LC3B and MAP1LC3C. In terms of tissue distribution, specifically expressed by acinar cells of chronic pancreatitis tissue.

It localises to the cytoplasm. The protein localises to the cytosol. It is found in the nucleus. Its subcellular location is the PML body. The protein resides in the cytoplasmic vesicle. It localises to the autophagosome. Its function is as follows. Antiproliferative and proapoptotic protein involved in cell stress response which acts as a dual regulator of transcription and autophagy. Acts as a positive regulator of autophagy. In response to cellular stress or activation of autophagy, relocates to autophagosomes where it interacts with autophagosome-associated proteins GABARAP, GABARAPL1/L2, MAP1LC3A/B/C and regulates autophagy. Acts as an antioxidant and plays a major role in p53/TP53-driven oxidative stress response. Possesses both a p53/TP53-independent intracellular reactive oxygen species (ROS) regulatory function and a p53/TP53-dependent transcription regulatory function. Positively regulates p53/TP53 and p73/TP73 and stimulates their capacity to induce apoptosis and regulate cell cycle. In response to double-strand DNA breaks, promotes p53/TP53 phosphorylation on 'Ser-46' and subsequent apoptosis. Acts as a tumor suppressor by inducing cell death by an autophagy and caspase-dependent mechanism. Can reduce cell migration by regulating the expression of SPARC. The sequence is that of Tumor protein p53-inducible nuclear protein 1 (Trp53inp1) from Rattus norvegicus (Rat).